The following is a 156-amino-acid chain: SsrA-binding protein (156 aa).

Belongs to the SmpB family.

The protein resides in the cytoplasm. Its function is as follows. Required for rescue of stalled ribosomes mediated by trans-translation. Binds to transfer-messenger RNA (tmRNA), required for stable association of tmRNA with ribosomes. tmRNA and SmpB together mimic tRNA shape, replacing the anticodon stem-loop with SmpB. tmRNA is encoded by the ssrA gene; the 2 termini fold to resemble tRNA(Ala) and it encodes a 'tag peptide', a short internal open reading frame. During trans-translation Ala-aminoacylated tmRNA acts like a tRNA, entering the A-site of stalled ribosomes, displacing the stalled mRNA. The ribosome then switches to translate the ORF on the tmRNA; the nascent peptide is terminated with the 'tag peptide' encoded by the tmRNA and targeted for degradation. The ribosome is freed to recommence translation, which seems to be the essential function of trans-translation. The protein is SsrA-binding protein of Paracoccus denitrificans (strain Pd 1222).